A 127-amino-acid chain; its full sequence is Large ribosomal subunit protein bL17 (127 aa).

Belongs to the bacterial ribosomal protein bL17 family. As to quaternary structure, part of the 50S ribosomal subunit. Contacts protein L32.

This is Large ribosomal subunit protein bL17 from Legionella pneumophila (strain Lens).